The chain runs to 101 residues: NADH-quinone oxidoreductase subunit K (101 aa).

The next 3 membrane-spanning stretches (helical) occupy residues 4 to 24 (LGHM…GIFL), 30 to 50 (IVLL…FVAF), and 62 to 82 (FVFF…AILV).

This sequence belongs to the complex I subunit 4L family. As to quaternary structure, NDH-1 is composed of 14 different subunits. Subunits NuoA, H, J, K, L, M, N constitute the membrane sector of the complex.

It localises to the cell inner membrane. It carries out the reaction a quinone + NADH + 5 H(+)(in) = a quinol + NAD(+) + 4 H(+)(out). NDH-1 shuttles electrons from NADH, via FMN and iron-sulfur (Fe-S) centers, to quinones in the respiratory chain. The immediate electron acceptor for the enzyme in this species is believed to be ubiquinone. Couples the redox reaction to proton translocation (for every two electrons transferred, four hydrogen ions are translocated across the cytoplasmic membrane), and thus conserves the redox energy in a proton gradient. This is NADH-quinone oxidoreductase subunit K from Stenotrophomonas maltophilia (strain R551-3).